We begin with the raw amino-acid sequence, 311 residues long: MPGSEPYGRLQYREINGKRMAYIDEARGDAIVFQHGNPSSSYLWRNVLPHTEGLGRLVACDLIGMGASDKLDGSGPDSYHYHENRDYLFALWDALDLGDRVTLVLHDWGGALGFDWANRHRDRVAGIVHMETVSVPMEWDDFPDEVAQMFRGLRSPQGEEMVLENNAFIEGVLPSIVMRTLSEEEMIHYRRPFLNAGEDRRPTLSWPRDVPLAGEPAEVVAVIEDFGEWLATSDIPKLFIRADPGVIQGKQRILDIVRSWPNQTEITVPGTHFLQEDSADQIGEAIASFVREIRAGDNLHREAAPEMNSAS.

The AB hydrolase-1 domain maps to 30 to 148 (AIVFQHGNPS…WDDFPDEVAQ (119 aa)). D107 serves as the catalytic Nucleophile. E131 acts as the Proton donor in catalysis. H272 serves as the catalytic Proton acceptor.

It belongs to the haloalkane dehalogenase family. Type 2 subfamily. As to quaternary structure, monomer.

The enzyme catalyses 1-haloalkane + H2O = a halide anion + a primary alcohol + H(+). Catalyzes hydrolytic cleavage of carbon-halogen bonds in halogenated aliphatic compounds, leading to the formation of the corresponding primary alcohols, halide ions and protons. In Mycolicibacterium smegmatis (strain ATCC 700084 / mc(2)155) (Mycobacterium smegmatis), this protein is Haloalkane dehalogenase.